A 122-amino-acid polypeptide reads, in one-letter code: Large ribosomal subunit protein uL14 (122 aa).

This sequence belongs to the universal ribosomal protein uL14 family. Part of the 50S ribosomal subunit. Forms a cluster with proteins L3 and L19. In the 70S ribosome, L14 and L19 interact and together make contacts with the 16S rRNA in bridges B5 and B8.

Functionally, binds to 23S rRNA. Forms part of two intersubunit bridges in the 70S ribosome. The protein is Large ribosomal subunit protein uL14 of Synechococcus sp. (strain JA-2-3B'a(2-13)) (Cyanobacteria bacterium Yellowstone B-Prime).